The chain runs to 226 residues: Ribose-5-phosphate isomerase A (226 aa).

Substrate contacts are provided by residues 26–29 (TGST), 82–85 (DGAD), and 95–98 (KGGG). E104 functions as the Proton acceptor in the catalytic mechanism. Residue K122 coordinates substrate.

The protein belongs to the ribose 5-phosphate isomerase family. As to quaternary structure, homodimer.

It catalyses the reaction aldehydo-D-ribose 5-phosphate = D-ribulose 5-phosphate. It functions in the pathway carbohydrate degradation; pentose phosphate pathway; D-ribose 5-phosphate from D-ribulose 5-phosphate (non-oxidative stage): step 1/1. Its function is as follows. Catalyzes the reversible conversion of ribose-5-phosphate to ribulose 5-phosphate. The sequence is that of Ribose-5-phosphate isomerase A from Streptococcus uberis (strain ATCC BAA-854 / 0140J).